Reading from the N-terminus, the 570-residue chain is Probable electron transfer flavoprotein-ubiquinone oxidoreductase (570 aa).

13–27 lines the FAD pocket; that stretch reads VVIVGAGPAGLSAAI. [4Fe-4S] cluster-binding residues include Cys515, Cys539, Cys542, and Cys545. Positions 530 to 559 constitute a 4Fe-4S ferredoxin-type domain; that stretch reads KRFQINAANCVHCKTCDIKDPSQNITWVTP.

It depends on [4Fe-4S] cluster as a cofactor. FAD is required as a cofactor.

It catalyses the reaction a ubiquinone + reduced [electron-transfer flavoprotein] = a ubiquinol + oxidized [electron-transfer flavoprotein] + H(+). Its function is as follows. Accepts electrons from ETF and reduces ubiquinone. The protein is Probable electron transfer flavoprotein-ubiquinone oxidoreductase (etfD) of Acinetobacter baylyi (strain ATCC 33305 / BD413 / ADP1).